We begin with the raw amino-acid sequence, 434 residues long: Tungsten-containing formylmethanofuran dehydrogenase 2 subunit B (434 aa).

A non-standard amino acid (selenocysteine) is located at residue Sec120.

This sequence belongs to the FwdB family. This enzyme is composed of six subunits FwdA, FwdC, FwdD, FwdE, FwdF and FwdG. W-bis(molybdopterin guanine dinucleotide) is required as a cofactor.

It carries out the reaction N-formylmethanofuran + 2 oxidized [2Fe-2S]-[ferredoxin] + H2O = methanofuran + 2 reduced [2Fe-2S]-[ferredoxin] + CO2 + H(+). Its pathway is one-carbon metabolism; methanogenesis from CO(2); 5,10-methenyl-5,6,7,8-tetrahydromethanopterin from CO(2): step 1/3. Catalyzes the reversible oxidation of CO(2) and methanofuran (MFR) to N-formylmethanofuran (CHO-MFR). This enzyme is oxygen-labile. The chain is Tungsten-containing formylmethanofuran dehydrogenase 2 subunit B (fwdB) from Methanococcus maripaludis (strain DSM 14266 / JCM 13030 / NBRC 101832 / S2 / LL).